A 259-amino-acid polypeptide reads, in one-letter code: Tubulin-specific chaperone C (259 aa).

The 130-residue stretch at 112–241 (PEVYFENDTL…DEHPILDFTW (130 aa)) folds into the C-CAP/cofactor C-like domain.

It belongs to the TBCC family.

The protein localises to the cytoplasm. Its subcellular location is the cytoskeleton. Tubulin-folding protein; involved in the final step of the tubulin folding pathway. The chain is Tubulin-specific chaperone C (cin2) from Schizosaccharomyces pombe (strain 972 / ATCC 24843) (Fission yeast).